The sequence spans 603 residues: Nuclear receptor subfamily 2 group C member 1 (603 aa).

Residues 1 to 178 (MATIEEIAHQ…RLQRCIAFGM (178 aa)) form a required for interaction with KAT2B region. The segment at residues 110 to 185 (FDLCVVCGDK…FGMKQDSVQC (76 aa)) is a DNA-binding region (nuclear receptor). 2 consecutive NR C4-type zinc fingers follow at residues 113-133 (CVVCGDKASGRHYGAVTCEGC) and 149-173 (CRGSKDCIINKHHRNRCQYCRLQRC). A phosphoserine mark is found at serine 197 and serine 215. Threonine 220 carries the phosphothreonine modification. Position 222 is a phosphothreonine; by MAPK1 (threonine 222). A Glycyl lysine isopeptide (Lys-Gly) (interchain with G-Cter in SUMO2) cross-link involves residue lysine 250. The region spanning 348–590 (GSVHLITGDS…SVIPHILKME (243 aa)) is the NR LBD domain. Serine 581 carries the post-translational modification Phosphoserine; by PKC. The tract at residues 584–603 (PHILKMEPADYNSQIIGHSI) is required for interaction with NRIP1. A Glycyl lysine isopeptide (Lys-Gly) (interchain with G-Cter in SUMO2) cross-link involves residue lysine 588.

The protein belongs to the nuclear hormone receptor family. NR2 subfamily. In terms of assembly, homodimer. Heterodimer; binds DNA as a heterodimer with NR2C2 required for chromatin remodeling and for binding to promoter regions such as globin DR1 repeats. Interacts with NRIP1 (via its LXXLL motifs); the interaction provides corepressor activity. Interacts with HDAC3 (via the DNA-binding domain). Interacts with HDAC4 (via the DNA-binding domain). Interacts with PIAS1; the interaction is required for sumoylation of NR2C1. Interacts with UBE2I; the interaction is required for sumoylation of NR2C1. Interacts with KAT2B; the interaction acts as a corepressor of gene expression. Interacts with ESR1; the interaction prevents homodimerization of ESR1 and suppresses its transcriptional activity and cell growth. Post-translationally, sumoylation requires both PIAS1 and UBE2I. Sumoylation appears to dissociate NR2C1 from the PML nuclear bodies. Enhances the interaction with NRIP1 but inhibits interaction with KAT2B. In proliferating cells, stimulation by all-trans retinoic acid, activation of MAPK1-mediated phosphorylation and recruitment to PML bodies with subsequent sumoylation, suppresses OCT4 expression. In terms of processing, phosphorylated on several serine and threonine residues. Phosphorylation on Thr-222, stimulated by all-trans retinoic acid (atRA) mediates PML location and sumoylation in proliferating cells which then modulates its association with effector molecules, KAT2B and NRIP1. Phosphorylation on Ser-581 by PKC is important for protein stability and function as activator of RARB.

It is found in the nucleus. Its subcellular location is the PML body. Orphan nuclear receptor. Binds the IR7 element in the promoter of its own gene in an autoregulatory negative feedback mechanism. Primarily repressor of a broad range of genes. Binds to hormone response elements (HREs) consisting of two 5'-AGGTCA-3' half site direct repeat consensus sequences. Together with NR2C2, forms the core of the DRED (direct repeat erythroid-definitive) complex that represses embryonic and fetal globin transcription. Also activator of OCT4 gene expression. May be involved in stem cell proliferation and differentiation. Mediator of retinoic acid-regulated preadipocyte proliferation. This is Nuclear receptor subfamily 2 group C member 1 (NR2C1) from Homo sapiens (Human).